Consider the following 766-residue polypeptide: LPS-assembly protein LptD (766 aa).

The first 18 residues, methionine 1–alanine 18, serve as a signal peptide directing secretion.

Belongs to the LptD family. In terms of assembly, component of the lipopolysaccharide transport and assembly complex. Interacts with LptE and LptA.

The protein localises to the cell outer membrane. Functionally, together with LptE, is involved in the assembly of lipopolysaccharide (LPS) at the surface of the outer membrane. The protein is LPS-assembly protein LptD of Shewanella denitrificans (strain OS217 / ATCC BAA-1090 / DSM 15013).